The chain runs to 545 residues: Chaperonin GroEL (545 aa).

Residues 30-33 (TLGP), lysine 51, 87-91 (DGTTT), glycine 415, and aspartate 495 contribute to the ATP site.

Belongs to the chaperonin (HSP60) family. In terms of assembly, forms a cylinder of 14 subunits composed of two heptameric rings stacked back-to-back. Interacts with the co-chaperonin GroES.

It is found in the cytoplasm. The catalysed reaction is ATP + H2O + a folded polypeptide = ADP + phosphate + an unfolded polypeptide.. Together with its co-chaperonin GroES, plays an essential role in assisting protein folding. The GroEL-GroES system forms a nano-cage that allows encapsulation of the non-native substrate proteins and provides a physical environment optimized to promote and accelerate protein folding. This chain is Chaperonin GroEL, found in Yersinia pestis bv. Antiqua (strain Antiqua).